The chain runs to 282 residues: Heterogeneous nuclear ribonucleoprotein C (282 aa).

One can recognise an RRM domain in the interval 17–88 (SRVFIGNLNT…QVLDINLAAE (72 aa)). Disordered regions lie at residues 131 to 177 (APPP…RLKG) and 208 to 282 (QSKQ…EEDS). The Nuclear localization signal motif lies at 141-147 (PSKRQRV). The span at 161 to 172 (SKSGQRGGSSKS) shows a compositional bias: low complexity. The stretch at 177-217 (GDDLQAIKKELSQIKQRVDSLLENLERIERDQSKQDTKLDD) forms a coiled coil. Composition is skewed to basic and acidic residues over residues 208 to 217 (QSKQDTKLDD) and 224 to 235 (LKKEETGVKLIE). Composition is skewed to acidic residues over residues 236 to 257 (ETGD…EDTL) and 265 to 282 (KETE…EEDS).

Belongs to the RRM HNRPC family. RALY subfamily. As to quaternary structure, tetramer.

Its subcellular location is the nucleus. In terms of biological role, binds pre-mRNA and nucleates the assembly of 40S hnRNP particles. Interacts with poly-U tracts in the 3'-UTR or 5'-UTR of mRNA and modulates the stability and the level of translation of bound mRNA molecules. Single HNRNPC tetramers bind 230-240 nucleotides. Trimers of HNRNPC tetramers bind 700 nucleotides. May play a role in the early steps of spliceosome assembly and pre-mRNA splicing. N6-methyladenosine (m6A) has been shown to alter the local structure in mRNAs and long non-coding RNAs (lncRNAs) via a mechanism named 'm(6)A-switch', facilitating binding of HNRNPC, leading to regulation of mRNA splicing. The protein is Heterogeneous nuclear ribonucleoprotein C (hnrnpc) of Xenopus laevis (African clawed frog).